We begin with the raw amino-acid sequence, 170 residues long: Tubulin polymerization-promoting protein family member 2 (170 aa).

The tract at residues 127–170 (TGTHKERFDESGKGKGIAGREEMTDNTGYVSGYKGSGTYDKKTK) is disordered. The segment covering 129-149 (THKERFDESGKGKGIAGREEM) has biased composition (basic and acidic residues).

Belongs to the TPPP family. Expressed in spermatids. Detected in liver cancer (at protein level).

Its subcellular location is the cytoplasm. It is found in the cytosol. The protein localises to the cell projection. The protein resides in the cilium. It localises to the flagellum. Functionally, probable regulator of microtubule dynamics required for sperm motility. In contrast to other members of the family, has no microtubule bundling activity. The protein is Tubulin polymerization-promoting protein family member 2 of Homo sapiens (Human).